An 80-amino-acid chain; its full sequence is Cell division protein ZapB (80 aa).

The stretch at 3 to 80 (FEVLEKLEAK…SLLGKMEDVE (78 aa)) forms a coiled coil.

It belongs to the ZapB family. As to quaternary structure, homodimer. The ends of the coiled-coil dimer bind to each other, forming polymers. Interacts with FtsZ.

The protein resides in the cytoplasm. Functionally, non-essential, abundant cell division factor that is required for proper Z-ring formation. It is recruited early to the divisome by direct interaction with FtsZ, stimulating Z-ring assembly and thereby promoting cell division earlier in the cell cycle. Its recruitment to the Z-ring requires functional FtsA or ZipA. This chain is Cell division protein ZapB, found in Vibrio cholerae serotype O1 (strain ATCC 39541 / Classical Ogawa 395 / O395).